The sequence spans 327 residues: MTMESGADNQQSGDAAVTEAENQQMTVQAQPQIATLAQVSMPAAHATSSAPTVTLVQLPNGQTVQVHGVIQAAQPSVIQSPQVQTVQISTIAESEDSQESVDSVTDSQKRREILSRRPSYRKILNDLSSDAPGVPRIEEEKSEEETSAPAITTVTVPTPIYQTSSGQYIAITQGGAIQLANNGTDGVQGLQTLTMTNAAATQPGTTILQYAQTTDGQQILVPSNQVVVQAASGDVQTYQIRTAPTSTIAPGVVMASSPALPTQPAEEAARKREVRLMKNREAARECRRKKKEYVKCLENRVAVLENQNKTLIEELKALKDLYCHKSD.

2 disordered regions span residues 1–27 and 94–113; these read MTME…QMTV and SEDS…RREI. One can recognise a KID domain in the interval 87-146; that stretch reads QISTIAESEDSQESVDSVTDSQKRREILSRRPSYRKILNDLSSDAPGVPRIEEEKSEEET. S119 carries the phosphoserine; by CaMK1, CaMK2, CaMK4, PKB/AKT1 or PKB/AKT2, RPS6KA3, RPS6KA4, RPS6KA5 and SGK1 modification. A Glycyl lysine isopeptide (Lys-Gly) (interchain with G-Cter in SUMO2) cross-link involves residue K122. The disordered stretch occupies residues 126-151; it reads DLSSDAPGVPRIEEEKSEEETSAPAI. At S128 the chain carries Phosphoserine; by CaMK2. S257 carries the post-translational modification Phosphoserine; by HIPK2. The region spanning 269–327 is the bZIP domain; that stretch reads ARKREVRLMKNREAARECRRKKKEYVKCLENRVAVLENQNKTLIEELKALKDLYCHKSD. A basic motif region spans residues 270–295; it reads RKREVRLMKNREAARECRRKKKEYVK. Residues K271 and K290 each participate in a glycyl lysine isopeptide (Lys-Gly) (interchain with G-Cter in SUMO1) cross-link. The leucine-zipper stretch occupies residues 297–318; sequence LENRVAVLENQNKTLIEELKAL.

This sequence belongs to the bZIP family. Interacts with PPRC1. Binds DNA as a dimer. This dimer is stabilized by magnesium ions. Interacts, through the bZIP domain, with the coactivators CRTC1/TORC1, CRTC2/TORC2 and CRTC3/TORC3. Interacts (phosphorylated form) with TOX3. When phosphorylated on Ser-119, binds CREBBP. Interacts with ARRB1. Binds to HIPK2. Interacts with SGK1. Interacts with CREBL2; regulates CREB1 phosphorylation, stability and transcriptional activity. Interacts with TSSK4; this interaction facilitates phosphorylation on Ser-119. Forms a complex with KMT2A and CREBBP. Interacts with TOX4; CREB1 is required for full induction of TOX4-dependent activity and the interaction is increased by cAMP and inhibited by insulin. In terms of processing, phosphorylation of Ser-119 allows CREBBP binding. Stimulated by phosphorylation. Phosphorylated Ser-128 can be detected in the suprachiasmatic nucleus (SCN), the amygdala, the cortex, and the hippocampus but not in the striatum nor in the cerebellum. In the SCN, phosphorylation of Ser-128 and Ser-119 are stimulated by light exposure and submitted to circadian oscillations. In the retina, only phosphorylation of Ser-119 can be detected upon light exposure. Phosphorylation of both Ser-119 and Ser-128 in the SCN regulates the activity of CREB and participates in circadian rhythm generation. Phosphorylated upon calcium influx by CaMK4 and CaMK2 on Ser-119. CaMK4 is much more potent than CAMK2 in activating CREB. Phosphorylated by CaMK2 on Ser-128. Phosphorylation of Ser-128 blocks CREB-mediated transcription even when Ser-119 is phosphorylated. Phosphorylated by CaMK1. Phosphorylation of Ser-271 by HIPK2 in response to genotoxic stress promotes CREB1 activity, facilitating the recruitment of the coactivator CBP. Phosphorylated at Ser-119 by RPS6KA3, RPS6KA4 and RPS6KA5 in response to mitogenic or stress stimuli. CREBL2 positively regulates phosphorylation at Ser-119 thereby stimulating CREB1 transcriptional activity. In liver, phosphorylation is induced by fasting or glucagon in a circadian fashion. Phosphorylated by TSSK4 on Ser-119. Post-translationally, sumoylated with SUMO1. Sumoylation on Lys-290, but not on Lys-271, is required for nuclear localization of this protein. Sumoylation is enhanced under hypoxia, promoting nuclear localization and stabilization. Expressed in the heart (at protein level).

It is found in the nucleus. In terms of biological role, phosphorylation-dependent transcription factor that stimulates transcription upon binding to the DNA cAMP response element (CRE), a sequence present in many viral and cellular promoters. Transcription activation is enhanced by the TORC coactivators which act independently of Ser-119 phosphorylation. Involved in different cellular processes including the synchronization of circadian rhythmicity and the differentiation of adipose cells. Regulates the expression of apoptotic and inflammatory response factors in cardiomyocytes in response to ERFE-mediated activation of AKT signaling. The polypeptide is Cyclic AMP-responsive element-binding protein 1 (Creb1) (Mus musculus (Mouse)).